A 409-amino-acid polypeptide reads, in one-letter code: Shaggy-related protein kinase gamma (409 aa).

A2 carries the N-acetylalanine modification. The Protein kinase domain maps to 73 to 357; it reads YMAERVVGHG…ALDSLVHPFF (285 aa). Residues 79 to 87 and K102 each bind ATP; that span reads VGHGSFGVV. The active-site Proton acceptor is D198. Y233 is subject to Phosphotyrosine.

It belongs to the protein kinase superfamily. CMGC Ser/Thr protein kinase family. GSK-3 subfamily. As to quaternary structure, binds to KIB1. Component of a complex made of POLAR, BASL, ASK7/BIN2 and ASK3/SK12. Binds to POLAR and BASL. Autophosphorylated mainly on threonine and serine residues. In terms of tissue distribution, roots, shoots and leaves.

The protein localises to the cytoplasm. Its subcellular location is the cell cortex. The catalysed reaction is L-seryl-[protein] + ATP = O-phospho-L-seryl-[protein] + ADP + H(+). The enzyme catalyses L-threonyl-[protein] + ATP = O-phospho-L-threonyl-[protein] + ADP + H(+). Functionally, may mediate extracellular signals to regulate transcription in differentiating cells. Probably involved first at the cortical polarity site, to restrict MAPK signaling and promote asymmetric cell division (ACD), and second in the nucleus of stomatal lineage ground cells (SLGCs) or meristemoids, to limit cell division and to promote differentiation into pavement or stomatal guard cells, respectively. Phosphorylate YDA and SPCH in vitro. In Arabidopsis thaliana (Mouse-ear cress), this protein is Shaggy-related protein kinase gamma.